The primary structure comprises 437 residues: Methionine aminopeptidase 2 (437 aa).

The interval 1–90 (MAAQAAPAEE…LFPNNQYPKG (90 aa)) is disordered. Over residues 10-20 (ELSKLSVDETK) the composition is skewed to basic and acidic residues. A compositionally biased stretch (acidic residues) spans 31–42 (SDAESGDEEAEE). Residues 52 to 66 (AKKKKKRKPKKKKKA) are compositionally biased toward basic residues. His190 serves as a coordination point for substrate. Asp210, Asp221, and His290 together coordinate a divalent metal cation. Substrate is bound at residue His298. Residues Glu323 and Glu418 each coordinate a divalent metal cation.

It belongs to the peptidase M24A family. Methionine aminopeptidase eukaryotic type 2 subfamily. Co(2+) is required as a cofactor. It depends on Zn(2+) as a cofactor. The cofactor is Mn(2+). Requires Fe(2+) as cofactor.

The protein resides in the cytoplasm. It catalyses the reaction Release of N-terminal amino acids, preferentially methionine, from peptides and arylamides.. In terms of biological role, cotranslationally removes the N-terminal methionine from nascent proteins. The N-terminal methionine is often cleaved when the second residue in the primary sequence is small and uncharged (Met-Ala-, Cys, Gly, Pro, Ser, Thr, or Val). This is Methionine aminopeptidase 2 from Neurospora crassa (strain ATCC 24698 / 74-OR23-1A / CBS 708.71 / DSM 1257 / FGSC 987).